A 322-amino-acid polypeptide reads, in one-letter code: ATP-dependent 6-phosphofructokinase (322 aa).

ATP is bound at residue glycine 11. 21 to 25 (RAVTR) is a binding site for ADP. Residues 72-73 (RC) and 102-105 (GDGS) each bind ATP. Aspartate 103 lines the Mg(2+) pocket. 127-129 (TID) serves as a coordination point for substrate. The active-site Proton acceptor is the aspartate 129. An ADP-binding site is contributed by arginine 156. Residues arginine 164 and 171–173 (MGR) each bind substrate. ADP is bound by residues 187 to 189 (GAE), arginine 213, and 215 to 217 (KKH). Substrate is bound by residues glutamate 224, arginine 245, and 251 to 254 (HIQR).

This sequence belongs to the phosphofructokinase type A (PFKA) family. ATP-dependent PFK group I subfamily. Prokaryotic clade 'B1' sub-subfamily. Homotetramer. Mg(2+) serves as cofactor.

It is found in the cytoplasm. The catalysed reaction is beta-D-fructose 6-phosphate + ATP = beta-D-fructose 1,6-bisphosphate + ADP + H(+). Its pathway is carbohydrate degradation; glycolysis; D-glyceraldehyde 3-phosphate and glycerone phosphate from D-glucose: step 3/4. Allosterically activated by ADP and other diphosphonucleosides, and allosterically inhibited by phosphoenolpyruvate. Its function is as follows. Catalyzes the phosphorylation of D-fructose 6-phosphate to fructose 1,6-bisphosphate by ATP, the first committing step of glycolysis. This Staphylococcus epidermidis (strain ATCC 35984 / DSM 28319 / BCRC 17069 / CCUG 31568 / BM 3577 / RP62A) protein is ATP-dependent 6-phosphofructokinase.